A 259-amino-acid chain; its full sequence is GTP cyclohydrolase FolE2 (259 aa).

The protein belongs to the GTP cyclohydrolase IV family.

The enzyme catalyses GTP + H2O = 7,8-dihydroneopterin 3'-triphosphate + formate + H(+). The protein operates within cofactor biosynthesis; 7,8-dihydroneopterin triphosphate biosynthesis; 7,8-dihydroneopterin triphosphate from GTP: step 1/1. Its function is as follows. Converts GTP to 7,8-dihydroneopterin triphosphate. This is GTP cyclohydrolase FolE2 from Thermotoga neapolitana (strain ATCC 49049 / DSM 4359 / NBRC 107923 / NS-E).